Consider the following 399-residue polypeptide: Leu/Ile/Val-binding protein homolog 7 (399 aa).

An N-terminal signal peptide occupies residues 1–22; sequence MEKHLIALSVAALQAGAAPASA.

Belongs to the leucine-binding protein family.

Functionally, component of an amino-acid transport system. In Brucella abortus (strain 2308), this protein is Leu/Ile/Val-binding protein homolog 7.